We begin with the raw amino-acid sequence, 469 residues long: Probable acetate kinase (469 aa).

Asn30 is a binding site for Mg(2+). Residue Lys37 participates in ATP binding. Arg122 contributes to the substrate binding site. Asp179 serves as the catalytic Proton donor/acceptor. An ATP-binding site is contributed by 239–243 (HLGSG). Residue Glu453 participates in Mg(2+) binding.

The protein belongs to the acetokinase family. The cofactor is Mg(2+).

The enzyme catalyses acetate + ATP = acetyl phosphate + ADP. It functions in the pathway metabolic intermediate biosynthesis; acetyl-CoA biosynthesis; acetyl-CoA from acetate: step 1/2. The sequence is that of Probable acetate kinase from Neurospora crassa (strain ATCC 24698 / 74-OR23-1A / CBS 708.71 / DSM 1257 / FGSC 987).